The following is a 462-amino-acid chain: GTPase Der (462 aa).

2 consecutive EngA-type G domains span residues 3–166 (PVIA…TTET) and 175–348 (IKIA…HSAI). GTP-binding positions include 9 to 16 (GRPNVGKS), 56 to 60 (DTGGI), 118 to 121 (NKTD), 181 to 188 (GRPNVGKS), 228 to 232 (DTAGV), and 293 to 296 (NKWD). A KH-like domain is found at 349-433 (QSFSTPKLTR…PLKIEFKGGQ (85 aa)).

It belongs to the TRAFAC class TrmE-Era-EngA-EngB-Septin-like GTPase superfamily. EngA (Der) GTPase family. Associates with the 50S ribosomal subunit.

Functionally, GTPase that plays an essential role in the late steps of ribosome biogenesis. This Legionella pneumophila (strain Paris) protein is GTPase Der.